Consider the following 362-residue polypeptide: Phospho-N-acetylmuramoyl-pentapeptide-transferase (362 aa).

10 helical membrane passes run 28–48, 72–92, 94–114, 131–151, 169–189, 200–220, 236–256, 264–284, 290–310, and 339–359; these read IISFLSALFISLGIGHCVITW, TPTMGGIVLILSIVISVMVCA, LSNIYVWYVFFILITYGILGL, VLHKYFWQSLIALTLVIIIFM, FMPQLGIWYIFLAYFVVVGTS, GLAIMPIMFVAAGLAVVAWIS, FSGELIIICSAIIGAGLGFLW, IFMGDVGSLSLGGTLGIIAVL, LLLIMGGMFVIETLSVILQVI, and IIVRFWIISLMLVFVGLITLK.

This sequence belongs to the glycosyltransferase 4 family. MraY subfamily. Requires Mg(2+) as cofactor.

The protein resides in the cell inner membrane. The enzyme catalyses UDP-N-acetyl-alpha-D-muramoyl-L-alanyl-gamma-D-glutamyl-meso-2,6-diaminopimeloyl-D-alanyl-D-alanine + di-trans,octa-cis-undecaprenyl phosphate = di-trans,octa-cis-undecaprenyl diphospho-N-acetyl-alpha-D-muramoyl-L-alanyl-D-glutamyl-meso-2,6-diaminopimeloyl-D-alanyl-D-alanine + UMP. Its pathway is cell wall biogenesis; peptidoglycan biosynthesis. In terms of biological role, catalyzes the initial step of the lipid cycle reactions in the biosynthesis of the cell wall peptidoglycan: transfers peptidoglycan precursor phospho-MurNAc-pentapeptide from UDP-MurNAc-pentapeptide onto the lipid carrier undecaprenyl phosphate, yielding undecaprenyl-pyrophosphoryl-MurNAc-pentapeptide, known as lipid I. This chain is Phospho-N-acetylmuramoyl-pentapeptide-transferase, found in Blochmanniella pennsylvanica (strain BPEN).